We begin with the raw amino-acid sequence, 361 residues long: Free fatty acid receptor 4 (361 aa).

At 1–45 (MSPECARAAGDAPLRSLEQANRTRFSFFSDVKGDHRLLLAAVETT) the chain is on the extracellular side. A glycan (N-linked (GlcNAc...) asparagine) is linked at Asn21. Residues 46–66 (VLALIFAVSLLGNVCALVLVA) traverse the membrane as a helical segment. The Cytoplasmic segment spans residues 67-77 (RRRRRGTTACL). The helical transmembrane segment at 78–98 (VLNLFCADLLFISAIPLVLAV) threads the bilayer. At 99–112 (RWTEAWLLGPVACH) the chain is on the extracellular side. A disulfide bridge links Cys111 with Cys194. A helical transmembrane segment spans residues 113-133 (LLFYLMTLSGSVTILTLAAVS). Topologically, residues 134–156 (LERMVCIVHLQRGVRGPGRRARA) are cytoplasmic. Residues 157 to 177 (VLLTLIWGYSAVAALPLCVFF) traverse the membrane as a helical segment. The Extracellular portion of the chain corresponds to 178-204 (RVVPQRLPGADQEISICTLIWPTIAGE). A helical transmembrane segment spans residues 205 to 225 (ISWDVSFVTLNFLVPGLVIVI). Over 226–268 (SYSKILQITKASRKRLTVSLAYSESHQIRVSQQDFRLFRTLFL) the chain is Cytoplasmic. The helical transmembrane segment at 269 to 289 (LMVSFFIMWSPIIITILLILI) threads the bilayer. Topologically, residues 290–295 (QNFKQD) are extracellular. A helical membrane pass occupies residues 296–316 (LVIWPSLFFWVVAFTFANSAL). Topologically, residues 317-361 (NPILYNMTLCRNEWKKIFCCFWFPEKGAILTDTSVKRNDLSVISG) are cytoplasmic. Phosphothreonine is present on residues Thr347 and Thr349. Phosphoserine occurs at positions 350, 357, and 360.

The protein belongs to the G-protein coupled receptor 1 family. In terms of assembly, interacts (via C-terminus) with ARRB2 following LCFAs stimulation. Post-translationally, phosphorylated at two clusters of Ser and Thr residues located in the intracellular C-terminus. Prerequisite for FFAR4 internalization via an ARRB2-dependent pathway. Highly expressed in lung and colon.

It localises to the cell membrane. Its subcellular location is the endosome membrane. The protein localises to the lysosome membrane. It is found in the cell projection. The protein resides in the cilium membrane. G-protein-coupled receptor for long-chain fatty acids (LCFAs) with a major role in adipogenesis, energy metabolism and inflammation. Signals via G-protein and beta-arrestin pathways. LCFAs sensing initiates activation of phosphoinositidase C-linked G proteins GNAQ and GNA11 (G(q)/G(11)), inducing a variety of cellular responses via second messenger pathways such as intracellular calcium mobilization, modulation of cyclic adenosine monophosphate (cAMP) production, and mitogen-activated protein kinases (MAPKs). After LCFAs binding, associates with beta-arrestin ARRB2 that acts as an adapter protein coupling the receptor to specific downstream signaling pathways, as well as mediating receptor endocytosis. In response to dietary fats, plays an important role in the regulation of adipocyte proliferation and differentiation. Acts as a receptor for omega-3 polyunsaturated fatty acids (PUFAs) at primary cilium of perivascular preadipocytes, initiating an adipogenic program via cAMP and CTCF-dependent chromatin remodeling that ultimately results in transcriptional activation of adipogenic genes and cell cycle entry. Induces differentiation of brown and beige adipocytes probably via autocrine and endocrine functions of FGF21 hormone. Contributes to the thermogenic activation of brown adipose tissue and the browning of white adipose tissue. Activates brown adipocytes by initiating intracellular calcium signaling leading to mitochondrial depolarization and fission, and overall increased mitochondrial respiration. Consequently stimulates fatty acid uptake and oxidation in mitochondria together with UCP1-mediated thermogenic respiration, eventually reducing fat mass. Regulates bi-potential differentiation of bone marrow mesenchymal stem cells toward osteoblasts or adipocytes likely by up-regulating distinct integrins. In response to dietary fats regulates hormone secretion and appetite. Stimulates GIP and GLP1 secretion from enteroendocrine cells as well as GCG secretion in pancreatic alpha cells, thereby playing a role in the regulation of blood glucose levels. Negatively regulates glucose-induced SST secretion in pancreatic delta cells. Mediates LCFAs inhibition of GHRL secretion, an appetite-controlling hormone. In taste buds, contributes to sensing of dietary fatty acids by the gustatory system. During the inflammatory response, promotes anti-inflammatory M2 macrophage differentiation in adipose tissue. Mediates the anti-inflammatory effects of omega-3 PUFAs via inhibition of NLRP3 inflammasome activation. In this pathway, interacts with adapter protein ARRB2 and inhibits the priming step triggered by Toll-like receptors (TLRs) at the level of TAK1 and TAB1. Further inhibits the activation step when ARRB2 directly associates with NLRP3, leading to inhibition of pro-inflammatory cytokine release. Mediates LCFAs anti-apoptotic effects. This is Free fatty acid receptor 4 (FFAR4) from Macaca fascicularis (Crab-eating macaque).